A 359-amino-acid polypeptide reads, in one-letter code: Oxopyrrolidines biosynthesis cluster protein G (359 aa).

Positions 1-32 (MDHLRDSLLSSLPRDSPSIGAMDYARRDREST) are disordered. The span at 7-18 (SLLSSLPRDSPS) shows a compositional bias: low complexity.

In terms of biological role, part of the gene cluster that mediates the biosynthesis of oxopyrrolidines, polyketide-amino acid hybrid compounds with feature structures of tetramic acid. Does not seem to play a role in oxopyrrolidines A and B biosynthesis. In Penicillium oxalicum (strain 114-2 / CGMCC 5302) (Penicillium decumbens), this protein is Oxopyrrolidines biosynthesis cluster protein G.